Reading from the N-terminus, the 328-residue chain is Methionyl-tRNA formyltransferase (328 aa).

(6S)-5,6,7,8-tetrahydrofolate is bound at residue 110-113 (SLLP).

Belongs to the Fmt family.

The catalysed reaction is L-methionyl-tRNA(fMet) + (6R)-10-formyltetrahydrofolate = N-formyl-L-methionyl-tRNA(fMet) + (6S)-5,6,7,8-tetrahydrofolate + H(+). Its function is as follows. Attaches a formyl group to the free amino group of methionyl-tRNA(fMet). The formyl group appears to play a dual role in the initiator identity of N-formylmethionyl-tRNA by promoting its recognition by IF2 and preventing the misappropriation of this tRNA by the elongation apparatus. In Prochlorococcus marinus (strain AS9601), this protein is Methionyl-tRNA formyltransferase.